The chain runs to 1066 residues: Ribosomal protein S6 kinase delta-1 (1066 aa).

In terms of domain architecture, PX spans Ser-8 to Asp-132. A disordered region spans residues Val-207 to Gly-228. Residues Glu-212–Arg-223 are compositionally biased toward basic and acidic residues. The region spanning Val-277–Ser-305 is the MIT domain. 5 positions are modified to phosphoserine: Ser-282, Ser-423, Ser-427, Ser-449, and Ser-455. Positions Gly-344 to Gln-445 constitute a Protein kinase 1 domain. The tract at residues Val-441 to Thr-509 is disordered. The span at Ser-448–Ser-458 shows a compositional bias: low complexity. The segment covering Ser-474 to Asp-483 has biased composition (polar residues). Residues Asp-492–Ser-503 are compositionally biased toward low complexity. 10 positions are modified to phosphoserine: Ser-494, Ser-528, Ser-583, Ser-605, Ser-608, Ser-640, Ser-661, Ser-664, Ser-667, and Ser-794. Residues His-553–Ser-596 are disordered. Residues Ser-582–Ser-593 show a composition bias toward low complexity. In terms of domain architecture, Protein kinase 2 spans Ser-794–Phe-1056. Residues Gly-801–Val-809 and Arg-820 contribute to the ATP site. Ser-872 carries the post-translational modification Phosphoserine. Residue Asp-929 is the Proton acceptor of the active site.

This sequence belongs to the protein kinase superfamily. Ser/Thr protein kinase family. S6 kinase subfamily. In terms of assembly, interacts with SPHK1 and phosphatidylinositol 3-phosphate. Interacts (via PX domain) with PRDX3. Highly expressed in testis, skeletal muscle, brain, heart, placenta, kidney and liver and weakly expressed in thymus, small intestine, lung and colon.

The protein resides in the cytoplasm. It is found in the membrane. Its subcellular location is the early endosome. It carries out the reaction L-seryl-[protein] + ATP = O-phospho-L-seryl-[protein] + ADP + H(+). It catalyses the reaction L-threonyl-[protein] + ATP = O-phospho-L-threonyl-[protein] + ADP + H(+). May be involved in transmitting sphingosine-1 phosphate (SPP)-mediated signaling into the cell. Plays a role in the recruitment of PRDX3 to early endosomes. This chain is Ribosomal protein S6 kinase delta-1 (RPS6KC1), found in Homo sapiens (Human).